Consider the following 1295-residue polypeptide: Phosphoribosylformylglycinamidine synthase (1295 aa).

Residues Ser-302–Pro-327 form a disordered region. ATP is bound by residues Gly-306–Asp-317 and Ala-677. Asp-678, Glu-717, Asn-721, and Asp-884 together coordinate Mg(2+). Residue Ser-886 coordinates ATP. The Glutamine amidotransferase type-1 domain occupies Val-1042–Gly-1295. The Nucleophile role is filled by Cys-1135. Catalysis depends on residues His-1260 and Glu-1262.

It in the N-terminal section; belongs to the FGAMS family. In terms of assembly, monomer.

The protein resides in the cytoplasm. The catalysed reaction is N(2)-formyl-N(1)-(5-phospho-beta-D-ribosyl)glycinamide + L-glutamine + ATP + H2O = 2-formamido-N(1)-(5-O-phospho-beta-D-ribosyl)acetamidine + L-glutamate + ADP + phosphate + H(+). Its pathway is purine metabolism; IMP biosynthesis via de novo pathway; 5-amino-1-(5-phospho-D-ribosyl)imidazole from N(2)-formyl-N(1)-(5-phospho-D-ribosyl)glycinamide: step 1/2. In terms of biological role, phosphoribosylformylglycinamidine synthase involved in the purines biosynthetic pathway. Catalyzes the ATP-dependent conversion of formylglycinamide ribonucleotide (FGAR) and glutamine to yield formylglycinamidine ribonucleotide (FGAM) and glutamate. The polypeptide is Phosphoribosylformylglycinamidine synthase (Photorhabdus laumondii subsp. laumondii (strain DSM 15139 / CIP 105565 / TT01) (Photorhabdus luminescens subsp. laumondii)).